A 640-amino-acid polypeptide reads, in one-letter code: Threonine--tRNA ligase (640 aa).

The 61-residue stretch at 1-61 (MPAITLPDGS…DADARLRFIT (61 aa)) folds into the TGS domain. Residues 243 to 536 (DHRKIGRQMD…LIENCAGRFP (294 aa)) form a catalytic region. Positions 336, 387, and 513 each coordinate Zn(2+).

It belongs to the class-II aminoacyl-tRNA synthetase family. As to quaternary structure, homodimer. It depends on Zn(2+) as a cofactor.

Its subcellular location is the cytoplasm. It catalyses the reaction tRNA(Thr) + L-threonine + ATP = L-threonyl-tRNA(Thr) + AMP + diphosphate + H(+). Catalyzes the attachment of threonine to tRNA(Thr) in a two-step reaction: L-threonine is first activated by ATP to form Thr-AMP and then transferred to the acceptor end of tRNA(Thr). Also edits incorrectly charged L-seryl-tRNA(Thr). This chain is Threonine--tRNA ligase, found in Acidiphilium cryptum (strain JF-5).